A 445-amino-acid chain; its full sequence is Maltoporin (445 aa).

Positions 1-25 (MKMKAKWLPIAAGVTAALASQAAFA) are cleaved as a signal peptide.

The protein belongs to the porin LamB (TC 1.B.3) family. Homotrimer formed of three 18-stranded antiparallel beta-barrels, containing three independent channels.

It is found in the cell outer membrane. The catalysed reaction is beta-maltose(in) = beta-maltose(out). In terms of biological role, involved in the transport of maltose and maltodextrins. The polypeptide is Maltoporin (Aeromonas salmonicida).